We begin with the raw amino-acid sequence, 104 residues long: Integration host factor subunit alpha (104 aa).

Belongs to the bacterial histone-like protein family. As to quaternary structure, heterodimer of an alpha and a beta chain.

In terms of biological role, this protein is one of the two subunits of integration host factor, a specific DNA-binding protein that functions in genetic recombination as well as in transcriptional and translational control. The chain is Integration host factor subunit alpha from Bartonella quintana (strain Toulouse) (Rochalimaea quintana).